The chain runs to 257 residues: Flavodoxin/ferredoxin--NADP reductase (257 aa).

In terms of domain architecture, FAD-binding FR-type spans 2-110 (NPWINANVLK…EKSFGFFTLD (109 aa)). FAD is bound by residues 59–62 (RAYS), Tyr-75, 83–85 (KLS), and Thr-125. Residues 152–153 (VR), 182–183 (SR), Arg-193, 223–225 (NPA), and Asp-229 each bind NADP(+). 256–257 (YW) contributes to the FAD binding site.

Belongs to the ferredoxin--NADP reductase type 1 family. Requires FAD as cofactor.

It is found in the cytoplasm. It carries out the reaction 2 reduced [2Fe-2S]-[ferredoxin] + NADP(+) + H(+) = 2 oxidized [2Fe-2S]-[ferredoxin] + NADPH. The catalysed reaction is reduced [flavodoxin] + NADP(+) = oxidized [flavodoxin] + NADPH + 2 H(+). Functionally, transports electrons between flavodoxin or ferredoxin and NADPH. This chain is Flavodoxin/ferredoxin--NADP reductase (fpr), found in Buchnera aphidicola subsp. Schizaphis graminum (strain Sg).